A 465-amino-acid polypeptide reads, in one-letter code: Mothers against decapentaplegic homolog 5 (465 aa).

An MH1 domain is found at 13-137; sequence PAVKRLLGWK…YKRVESPVLP (125 aa). Cys-65, Cys-110, Cys-122, and His-127 together coordinate Zn(2+). The disordered stretch occupies residues 163–242; it reads NEPHMPHNAT…MGQDNSQSMD (80 aa). The span at 173–183 shows a compositional bias: polar residues; that stretch reads FPDSFQQPNST. Low complexity predominate over residues 198–214; the sequence is ASSTYPSSPASSGPSSP. The MH2 domain maps to 271-465; it reads WCSIVYYELN…SPLNPISSVS (195 aa).

Belongs to the dwarfin/SMAD family. In terms of assembly, may form trimers with the co-SMAD SMAD4.

Its subcellular location is the cytoplasm. It localises to the nucleus. Functionally, transcriptional modulator activated by BMP (bone morphogenetic proteins) type 1 receptor kinase. SMAD5 is a receptor-regulated SMAD (R-SMAD). This chain is Mothers against decapentaplegic homolog 5 (SMAD5), found in Gallus gallus (Chicken).